Consider the following 244-residue polypeptide: Cysteine-rich secretory protein 2 (244 aa).

The first 21 residues, 1–21 (MALLPVVVFLITMLLPCVLTN), serve as a signal peptide directing secretion. An SCP domain is found at 43–170 (NKHNQLRKSV…SLKYYYVCQY (128 aa)). 5 disulfide bridges follow: Cys190/Cys197, Cys193/Cys202, Cys206/Cys239, Cys215/Cys233, and Cys224/Cys237. The ShKT domain maps to 206-239 (CEYEDLLSNCESLKNTAGCEHQLLVEKCKATCRC).

This sequence belongs to the CRISP family. Interacts with NSUN4 isoform 3. In terms of tissue distribution, testis.

Its subcellular location is the secreted. May regulate some ion channels' activity and thereby regulate calcium fluxes during sperm capacitation. The chain is Cysteine-rich secretory protein 2 (CRISP2) from Cavia porcellus (Guinea pig).